The primary structure comprises 609 residues: Neutral protease (609 aa).

An N-terminal signal peptide occupies residues 1–24; that stretch reads MNKTQRHINWLLAVSAATALPVTA. Positions 25-196 are excised as a propeptide; sequence AEMINVNDGS…VLQTWDGLNH (172 aa). His-343 is a binding site for Zn(2+). Glu-344 is an active-site residue. His-347 and Glu-367 together coordinate Zn(2+). Catalysis depends on His-426, which acts as the Proton donor.

Belongs to the peptidase M4 family. The cofactor is Zn(2+).

Its subcellular location is the secreted. The enzyme catalyses Preferential cleavage of bonds with bulky hydrophobic groups in P2 and P1'. Phe at P1' is the most favored residue, which distinguished this enzyme from thermolysin.. Its function is as follows. Extracellular zinc metalloprotease. The polypeptide is Neutral protease (nprV) (Vibrio proteolyticus (Aeromonas proteolytica)).